Here is a 255-residue protein sequence, read N- to C-terminus: uncharacterized protein (255 aa).

It belongs to the methyltransferase superfamily.

This is an uncharacterized protein from Mycobacterium ulcerans (strain Agy99).